Here is a 269-residue protein sequence, read N- to C-terminus: Signal recognition particle SEC65 subunit (269 aa).

2 disordered regions span residues 30-65 (RTPIAPVQPGPQITRSQDQEPPLFPNFPHPEQDKSV) and 236-269 (PMTKSIYDPEPEQPQVKAPQAPKQPKKKVMKIRG). The segment covering 248-258 (QPQVKAPQAPK) has biased composition (low complexity). The span at 259-269 (QPKKKVMKIRG) shows a compositional bias: basic residues.

The protein belongs to the SRP19 family. Fungal signal recognition particle consists of a 7S RNA molecule (scR1) and at least six protein subunits: SRP72, SRP68, SRP54, SEC65, SRP21 andSRP14.

The protein resides in the cytoplasm. Signal-recognition-particle assembly has a crucial role in targeting secretory proteins to the rough endoplasmic reticulum membrane. It must be involved intimately in the translocation of a wide variety of protein substrates. This chain is Signal recognition particle SEC65 subunit (SEC65), found in Debaryomyces hansenii (strain ATCC 36239 / CBS 767 / BCRC 21394 / JCM 1990 / NBRC 0083 / IGC 2968) (Yeast).